The sequence spans 238 residues: MSNDKIIVALDVPDTESAIALIDKLESVTFWKVGLELFTSSGPRILEVLKSRQKRIFLDLKFHDIPNTVAGACRAAAGYGVDLMTIHATSGRDALKAAKEAVEEGAAQAGVKPPKLIAVTVLTSISARQLALDLKIPSELPEYALDMALMAQEMGLDGAVCSPQEVAHLRQICGDDFVLVCPGVRPTWAEAGDQKRSLTPSQAIQAGADYLVIGRPITAAAEPELAWKRISQELTTVV.

Substrate-binding positions include D11, K32, 59–68, T123, R185, Q194, G214, and R215; that span reads DLKFHDIPNT. The active-site Proton donor is the K61.

Belongs to the OMP decarboxylase family. Type 1 subfamily. As to quaternary structure, homodimer.

The catalysed reaction is orotidine 5'-phosphate + H(+) = UMP + CO2. The protein operates within pyrimidine metabolism; UMP biosynthesis via de novo pathway; UMP from orotate: step 2/2. In terms of biological role, catalyzes the decarboxylation of orotidine 5'-monophosphate (OMP) to uridine 5'-monophosphate (UMP). In Nostoc sp. (strain PCC 7120 / SAG 25.82 / UTEX 2576), this protein is Orotidine 5'-phosphate decarboxylase.